Reading from the N-terminus, the 127-residue chain is Serum amyloid A protein (127 aa).

An N-terminal signal peptide occupies residues 1–18 (MKLLTSLFLLSLVLCVNS). The residue at position 19 (Gln-19) is a Pyrrolidone carboxylic acid. Residues 89 to 127 (GGSSGRGVEDSMADQEANRWGRSGKDPNRYRPKGLDPKY) form a disordered region. Basic and acidic residues predominate over residues 104–127 (EANRWGRSGKDPNRYRPKGLDPKY).

It belongs to the SAA family. In terms of tissue distribution, expressed by the liver; secreted in plasma.

The protein resides in the secreted. Functionally, major acute phase reactant. Apolipoprotein of the HDL complex. The sequence is that of Serum amyloid A protein (SAA1) from Notamacropus eugenii (Tammar wallaby).